We begin with the raw amino-acid sequence, 292 residues long: uncharacterized protein (292 aa).

A helical transmembrane segment spans residues 66–86 (LFFYLLFWWTYLTIVVLLTVP).

The protein localises to the host membrane. This is an uncharacterized protein from Alcelaphine herpesvirus 1 (strain C500) (AlHV-1).